The primary structure comprises 379 residues: MSSIQGKGTAGPSPEGIPNSREDGEMNPEGVTISGQTVSFTSVSKSASADDIQQVALPIIQSDSLASSPILGGAIGEIEVADMVAEVVENNEANVQQLDEDLEAIFQAIDAGEEQLESLEVKNKSSLKGVRYSSGRHGMDRNKSSSLSPERTRLANIRTSLRSTASRMRHHAGLVSSSLADLQKQLRSISQEDLKAALGKDSEAVLSRLRKLGLDVNKKGEWRLRTNGDIGRLNQSIHDLSLLVENVNDEGILSLNKEASEEEVNACCSSGSKACQFLQEHLMSALRAIYQQILRFLNWISRKIGVGSKRTDDYYTRPGVFTNPYASYLGANPPINDPRSLRERLRGGGALSGEDTLFSMPQDDSVDSESVSDDDRGSR.

3 disordered regions span residues Met1–Thr37, Val130–Glu150, and Asn332–Arg379.

It belongs to the chlamydial CPn_0499/CT_392/TC_0671 family.

This is an uncharacterized protein from Chlamydia muridarum (strain MoPn / Nigg).